A 369-amino-acid chain; its full sequence is MLTVYTQSDQALSWIERHGHCPPVFVCVLGFTETGLIPGISAAGKTPADRKLTAIADAEFLIKGTTAGATYPLPPLISGVSPVFITKALVDALHTPVYLFNSGLPIPPAVPVINLDGQPARCLSTGQALPLALVEHLFQQGLQWGAQLAQEHAESYLVLSECVVGGTTTALGVLLGLGIDAGGKVNSSHPHCNHQQKLALVRQSLEHHSPHLNAMEVVAAVGDPMQMVVAGMAIAASHSTGVMLAGGTQMLAVYALIQALTRQQNLAVDFSRLVVGTTKWVCEDASGDTVGLANLLAPVSLLAPQLSFSSSVYPQLQVYEQGFVKEGVGAGAMAIAAHLYKNWGQEQLLELIENLITRELGQVKEKKQQ.

Belongs to the UPF0284 family.

This chain is UPF0284 protein sll1500, found in Synechocystis sp. (strain ATCC 27184 / PCC 6803 / Kazusa).